The following is a 105-amino-acid chain: DNA-directed RNA polymerase subunit omega (105 aa).

It belongs to the RNA polymerase subunit omega family. In terms of assembly, the RNAP catalytic core consists of 2 alpha, 1 beta, 1 beta' and 1 omega subunit. When a sigma factor is associated with the core the holoenzyme is formed, which can initiate transcription.

The catalysed reaction is RNA(n) + a ribonucleoside 5'-triphosphate = RNA(n+1) + diphosphate. Promotes RNA polymerase assembly. Latches the N- and C-terminal regions of the beta' subunit thereby facilitating its interaction with the beta and alpha subunits. The polypeptide is DNA-directed RNA polymerase subunit omega (Streptococcus uberis (strain ATCC BAA-854 / 0140J)).